The sequence spans 216 residues: MRQKHYLEAAAWKLQDSCPGQARYLLWAYSSSHDDKSTFEGTCPYCCQLLVQDKSRVRLKPKPKLTPKIQKLLNREARNYTLSFKEAKILKKYKDSKSVLLITCKTCNRTVKHHGKSRSFLSALKSNPTTPTSKLSLKTPERKTPSSANLNHTSGSKGKSPALIFRTPTSGQSTSICSSKNASKTKKHFSQLKMLLSQSESKKNPKMDFRNFLSSL.

2 disordered regions span residues arginine 118–threonine 185 and serine 197–leucine 216. Residues leucine 124 to serine 136 show a composition bias toward polar residues. The residue at position 126 (serine 126) is a Phosphoserine. Threonine 130 and threonine 139 each carry phosphothreonine. Composition is skewed to polar residues over residues proline 145 to lysine 157 and threonine 167 to alanine 182. A compositionally biased stretch (basic and acidic residues) spans glutamate 200 to phenylalanine 209.

Belongs to the UPF0711 family.

In Bos taurus (Bovine), this protein is UPF0711 protein C18orf21 homolog.